A 208-amino-acid chain; its full sequence is MNKAELIDVLTTKMGTDRRQATAAVENVVDTIVRAVHKGDSVTITGFGVFEQRRRAARVARNPRTGETVKVKPTSVPAFRPGAQFKAVISGAQKLPADGPAVKRGVTAGPAKKAAKKAPAKKAAAKKTATKAAAKKAPAKKAATKAPAKKAATKAPAKKAATKAPAKKAATKAPAKKAAAKAPAKKAATKAPAKKAAAKKAPAKKGRR.

A bacterial histone-like domain region spans residues 1–90 (MNKAELIDVL…PGAQFKAVIS (90 aa)). Lys3 carries the N6-acetyllysine modification. Lys3 bears the N6-acetyllysine; alternate; partial mark. An N6-methyllysine; alternate; partial modification is found at Lys3. Lys72 is subject to N6-acetyllysine; partial. Position 86 is an N6-methyllysine; partial (Lys86). The interval 92-208 (AQKLPADGPA…KKAPAKKGRR (117 aa)) is C-terminus, required for nucleoid localization. Residues Lys94 and Lys103 each carry the N6-acetyllysine; alternate; partial modification. Residues Lys94 and Lys103 each carry the N6-methyllysine; alternate; partial modification. The disordered stretch occupies residues 96-208 (PADGPAVKRG…KKAPAKKGRR (113 aa)). Residues 101–205 (AVKRGVTAGP…AAAKKAPAKK (105 aa)) are degenerate repeats region. Over residues 113–208 (KAAKKAPAKK…KKAPAKKGRR (96 aa)) the composition is skewed to basic residues. N6-acetyllysine is present on residues Lys116, Lys136, Lys149, and Lys168.

This sequence belongs to the bacterial histone-like protein family. Long actinobacterial subfamily. May form oligomers. Interacts with RNase E (rne). In addition to the identifed modifications, is also methylated on one of Arg-53; Arg-54 or Arg-55.

The protein localises to the cytoplasm. Its subcellular location is the nucleoid. It is found in the secreted. The protein resides in the cell wall. The enzyme catalyses 4 Fe(2+) + O2 + 4 H(+) = 4 Fe(3+) + 2 H2O. With respect to regulation, trans-stilbene derivative 4,4'-[(E)-ethene-1,2 diylbis({5[(phenylcarbonyl)amino]benzene-2,1-diyl}sulfonylimino)] dibenzoic acid (SD1) inhibits DNA binding at 50 uM. SD1 does not inhibit growth in a range of 3-1600 uM. A nucleoid-associated protein (NAP) that plays a crucial role in local chromosome architecture. Helps organize newly replicated oriC proximal regions and contributes to the timing of replication initiation and coordinating replication with chromosome segregation. There are between 30,000-60,000 molecules in a log phase cell; the protein-DNA complex is dynamic during the cell cycle, with more complexes near the cell ends. Binds irregularly along the chromosome with higher binding near the origin of replication (oriC) and lowest binding near the chromosome terminus (ter). Binds DNA non-sequence specifically via both its N- and C-terminal domains with high affinity, has no preference for linear or supercoiled DNA. Binds four-way junction DNA. Represses T7 RNA polymerase in vitro. The C-terminal domain enhances DNA end-joining in vitro in the presence of T4 DNA ligase. RNase E and HupB jointly contribute to cellular adaptation to changing growth conditions and survival during antibiotic treatment. Its function is as follows. Has ferroxidase activity, converts Fe(2+) into Fe(3+). Binds Fe(3+) but not Fe(2+); prevents the generation of hydroxyl radicals by the Fenton reaction and thus protects DNA from damage. May function in iron storage. Functionally, plays a role in epigenetic resistance to antibiotics. Growth on levels of isoniazid (INH) near the minimal inhibitory concentration (MIC) kills most bacteria. The surviving cells grow as either large or small colony variants (SCV), evidence suggest SCVs are associated with persistent infections. Mutating this protein leads to specific loss of SCVs. In terms of biological role, may play a role in cell wall assembly. This is DNA-binding protein HupB from Mycolicibacterium smegmatis (strain ATCC 700084 / mc(2)155) (Mycobacterium smegmatis).